We begin with the raw amino-acid sequence, 349 residues long: MDLDQLDLNPRITAAVKRGRLKSVKEILCYSGPDLQRLTGLPSHDVQCLLRAASLHLRGSRVLSALHLFQQKESFPEQHQRLSLGCPVLDQFLGGGLPLEGITGLAGCSSAGKTQLALQLCLAVQFPRQYGGLEAGAVYICTEDAFPSKRLWQLIAQQRRLRTDAPEELIEKIRFSNHIFIEHAADVDTLLECVSKKVPILLSRGMARLVVVDSIAAPFRCEFHLQASAIRAKLLLSLGATLRRLSSTFRSPVLCINQVTDMVEDQQSVSRSLGASEERLSPALGITWANQLLMRLMVDRTHEDDVTTGLPRSPVRTLRVLFAPHLPLSSCCYTVSGEGIRGMPGTQSY.

Methionine 1 is subject to N-acetylmethionine. 107–114 lines the ATP pocket; that stretch reads GCSSAGKT.

It belongs to the RecA family. RAD51 subfamily. Interacts with RAD51C and RAD51. Part of the CX3 complex consisting of RAD51C and XRCC3; the complex has a ring-like structure arranged into a flat disc around a central channel; CX3 can interact with RAD51 in vitro. Forms a complex with FANCD2, BRCA2 and phosphorylated FANCG. Interacts with SWSAP1 and ZSWIM7; involved in homologous recombination repair. Interacts directly with PALB2 which may serve as a scaffold for a HR complex containing PALB2, BRCA2, RAD51C, RAD51 and XRCC3.

The protein localises to the nucleus. It is found in the cytoplasm. It localises to the perinuclear region. The protein resides in the mitochondrion matrix. Its function is as follows. Involved in the homologous recombination repair (HRR) pathway of double-stranded DNA, thought to repair chromosomal fragmentation, translocations and deletions. Part of the RAD21 paralog protein complex CX3 which acts in the BRCA1-BRCA2-dependent HR pathway. Upon DNA damage, CX3 acts downstream of RAD51 recruitment; the complex binds predominantly to the intersection of the four duplex arms of the Holliday junction (HJ) and to junctions of replication forks. Involved in HJ resolution and thus in processing HR intermediates late in the DNA repair process; the function may be linked to the CX3 complex and seems to involve GEN1 during mitotic cell cycle progression. Part of a PALB2-scaffolded HR complex containing BRCA2 and RAD51C and which is thought to play a role in DNA repair by HR. Plays a role in regulating mitochondrial DNA copy number under conditions of oxidative stress in the presence of RAD51 and RAD51C. In Mus musculus (Mouse), this protein is DNA repair protein XRCC3 (Xrcc3).